A 156-amino-acid polypeptide reads, in one-letter code: ATP synthase subunit b (156 aa).

The helical transmembrane segment at methionine 1–valine 21 threads the bilayer.

This sequence belongs to the ATPase B chain family. As to quaternary structure, F-type ATPases have 2 components, F(1) - the catalytic core - and F(0) - the membrane proton channel. F(1) has five subunits: alpha(3), beta(3), gamma(1), delta(1), epsilon(1). F(0) has three main subunits: a(1), b(2) and c(10-14). The alpha and beta chains form an alternating ring which encloses part of the gamma chain. F(1) is attached to F(0) by a central stalk formed by the gamma and epsilon chains, while a peripheral stalk is formed by the delta and b chains.

Its subcellular location is the cell inner membrane. Its function is as follows. F(1)F(0) ATP synthase produces ATP from ADP in the presence of a proton or sodium gradient. F-type ATPases consist of two structural domains, F(1) containing the extramembraneous catalytic core and F(0) containing the membrane proton channel, linked together by a central stalk and a peripheral stalk. During catalysis, ATP synthesis in the catalytic domain of F(1) is coupled via a rotary mechanism of the central stalk subunits to proton translocation. Component of the F(0) channel, it forms part of the peripheral stalk, linking F(1) to F(0). The chain is ATP synthase subunit b from Nitrosococcus oceani (strain ATCC 19707 / BCRC 17464 / JCM 30415 / NCIMB 11848 / C-107).